The primary structure comprises 369 residues: DNA replication and repair protein RecF (369 aa).

30–37 (GINAQGKT) contributes to the ATP binding site.

Belongs to the RecF family.

The protein localises to the cytoplasm. Its function is as follows. The RecF protein is involved in DNA metabolism; it is required for DNA replication and normal SOS inducibility. RecF binds preferentially to single-stranded, linear DNA. It also seems to bind ATP. This Macrococcus caseolyticus (strain JCSC5402) (Macrococcoides caseolyticum) protein is DNA replication and repair protein RecF.